Reading from the N-terminus, the 501-residue chain is Cytochrome P450 monooxygenase ccsG (501 aa).

The first 28 residues, 1–28, serve as a signal peptide directing secretion; it reads MMITLFTLAVVSIGFFLWWLLTVQPAVT. Asn115 and Asn154 each carry an N-linked (GlcNAc...) asparagine glycan. Cys443 serves as a coordination point for heme.

It belongs to the cytochrome P450 family. Requires heme as cofactor.

It functions in the pathway mycotoxin biosynthesis. Functionally, cytochrome P450 monooxygenase; part of the gene cluster that mediates the biosynthesis of a family of the mycotoxins cytochalasins E and K. The hybrid PKS-NRPS synthetase ccsA and the enoyl reductase ccsC are responsible for fusion of phenylalanine with an octaketide backbone and subsequent release of the stable tetramic acid precursor. The polyketide synthase module (PKS) of the PKS-NRPS ccsA is responsible for the synthesis of the octaketide backbone. The downstream nonribosomal peptide synthetase (NRPS) amidates the carboxyl end of the octaketide with a phenylalanine. A reductase-like domain (R) at the C-terminus catalyzes the reductive release of the polyketide-amino acid intermediate. Because ccsA lacks a designated enoylreductase (ER) domain, the required activity is provided the enoyl reductase ccsC. Upon formation of the 11-membered carbocycle-fused perhydroisoindolone intermediate, a number of oxidative steps are required to afford the final cytochalasin E and K, including two hydroxylations at C17 and C18, one alcohol oxidation at C17, one epoxidation at C6 and C7 and two Baeyer-Villiger oxidations. The oxidative modification at C17, C18 and the C6-C7 epoxidation are likely to be catalyzed by the two cytochrome P450 oxygenases ccsD and ccsG. CcsD may be responsible for the epoxidation of the C6-C7 double bond. CcsG may be responsible for the successive oxidative modifications at C17 and C18. The double Baeyer-Villiger oxidations of ketocytochalasin to precytochalasin and cytochalasin Z(16) are among the final steps leading to cytochalasin E and K and are catalyzed by ccsB. The first oxygen insertion step follows that of the classic BVMO mechanism, generating the ester precytochalasin. Release of precytochalasin into an aqueous environment can generate the shunt product iso-precytochalasin through spontaneous isomerization. Alternatively, precytochalasin can undergo further oxidation by ccsB to yield the in-line carbonate-containing cytochalasin Z(16). Cytochalasin Z(16) is a precursor to cytochalasin E and cytochalasin K, whereas iso-precytochalasin is a precursor to cytochalasin Z(17) and rosellichalasin. The hydrolyase ccsE may catalyze hydrolysis of epoxide bond in cytochalasin E to afford cytochalasin K. The function of ccsF has not been assigned but it may play a role in post-PKS-NRPS biosynthetic step, resistance or transport of cytochalasins and related PKS-NRPS products. The sequence is that of Cytochrome P450 monooxygenase ccsG from Aspergillus clavatus (strain ATCC 1007 / CBS 513.65 / DSM 816 / NCTC 3887 / NRRL 1 / QM 1276 / 107).